We begin with the raw amino-acid sequence, 142 residues long: Photosystem II extrinsic protein U (142 aa).

A signal peptide spans 1–29 (MKGLVRLLTVFSLLLGCWGWLGTTQIAQA).

It belongs to the PsbU family. As to quaternary structure, PSII is composed of 1 copy each of membrane proteins PsbA, PsbB, PsbC, PsbD, PsbE, PsbF, PsbH, PsbI, PsbJ, PsbK, PsbL, PsbM, PsbT, PsbX, PsbY, PsbZ, Psb30/Ycf12, peripheral proteins PsbO, CyanoQ (PsbQ), PsbU, PsbV and a large number of cofactors. It forms dimeric complexes.

It is found in the cellular thylakoid membrane. One of the extrinsic, lumenal subunits of photosystem II (PSII). PSII is a light-driven water plastoquinone oxidoreductase, using light energy to abstract electrons from H(2)O, generating a proton gradient subsequently used for ATP formation. The extrinsic proteins stabilize the structure of photosystem II oxygen-evolving complex (OEC), the ion environment of oxygen evolution and protect the OEC against heat-induced inactivation. This chain is Photosystem II extrinsic protein U, found in Trichormus variabilis (strain ATCC 29413 / PCC 7937) (Anabaena variabilis).